The primary structure comprises 400 residues: Aspartate aminotransferase (400 aa).

L-aspartate-binding residues include Gly37, Trp126, and Asn176. Lys238 is modified (N6-(pyridoxal phosphate)lysine). Position 367 (Arg367) interacts with L-aspartate.

The protein belongs to the class-I pyridoxal-phosphate-dependent aminotransferase family. As to quaternary structure, homodimer. Pyridoxal 5'-phosphate serves as cofactor.

The protein localises to the cytoplasm. It carries out the reaction L-aspartate + 2-oxoglutarate = oxaloacetate + L-glutamate. In terms of biological role, catalyzes the reversible conversion of aspartate and 2-oxoglutarate to glutamate and oxaloacetate. Has very weak prephenate aminotransferase activity. The protein is Aspartate aminotransferase of Musicola paradisiaca (strain Ech703) (Dickeya paradisiaca).